The sequence spans 317 residues: Carbonic anhydrase 5B, mitochondrial (317 aa).

Residues 1–33 constitute a mitochondrion transit peptide; that stretch reads MVVMNSLRVILQASPGKLLWRKFQIPRFMPARP. Positions 37–296 constitute an Alpha-carbonic anhydrase domain; the sequence is YTCTYKTRNR…LMNRTVRSSF (260 aa). The Zn(2+) site is built by His130, His132, and His155. Residue 235–236 coordinates substrate; the sequence is TT.

The protein belongs to the alpha-carbonic anhydrase family. Requires Zn(2+) as cofactor. As to expression, strongest expression in heart, pancreas, kidney, placenta, lung, and skeletal muscle. Not expressed in liver.

It is found in the mitochondrion. The enzyme catalyses hydrogencarbonate + H(+) = CO2 + H2O. Its activity is regulated as follows. Inhibited by coumarins, sulfonamide derivatives such as acetazolamide (AZA), saccharin and Foscarnet (phosphonoformate trisodium salt). Functionally, mitochondrial carbonic anhydrase that catalyzes the reversible conversion of carbon dioxide to bicarbonate/HCO3. The protein is Carbonic anhydrase 5B, mitochondrial (CA5B) of Homo sapiens (Human).